A 341-amino-acid chain; its full sequence is DNA-directed RNA polymerase subunit alpha (341 aa).

The tract at residues 1-226 (MLIAQRPTIT…ELFGLVRELN (226 aa)) is alpha N-terminal domain (alpha-NTD). The alpha C-terminal domain (alpha-CTD) stretch occupies residues 241–341 (AALAADLALP…DQRYIETEQL (101 aa)).

This sequence belongs to the RNA polymerase alpha chain family. As to quaternary structure, homodimer. The RNAP catalytic core consists of 2 alpha, 1 beta, 1 beta' and 1 omega subunit. When a sigma factor is associated with the core the holoenzyme is formed, which can initiate transcription.

The catalysed reaction is RNA(n) + a ribonucleoside 5'-triphosphate = RNA(n+1) + diphosphate. In terms of biological role, DNA-dependent RNA polymerase catalyzes the transcription of DNA into RNA using the four ribonucleoside triphosphates as substrates. This chain is DNA-directed RNA polymerase subunit alpha, found in Acidothermus cellulolyticus (strain ATCC 43068 / DSM 8971 / 11B).